The primary structure comprises 714 residues: Fatty acid oxidation complex subunit alpha (714 aa).

Residues 1–190 (MEMASAFTLN…KLGLVDDVVP (190 aa)) form an enoyl-CoA hydratase region. The segment at 306–714 (APLNSVGILG…FWKTTATDLQ (409 aa)) is 3-hydroxyacyl-CoA dehydrogenase.

This sequence in the N-terminal section; belongs to the enoyl-CoA hydratase/isomerase family. It in the central section; belongs to the 3-hydroxyacyl-CoA dehydrogenase family. As to quaternary structure, heterotetramer of two alpha chains (FadJ) and two beta chains (FadI).

It localises to the cytoplasm. It carries out the reaction a (3S)-3-hydroxyacyl-CoA = a (2E)-enoyl-CoA + H2O. The enzyme catalyses a 4-saturated-(3S)-3-hydroxyacyl-CoA = a (3E)-enoyl-CoA + H2O. The catalysed reaction is a (3S)-3-hydroxyacyl-CoA + NAD(+) = a 3-oxoacyl-CoA + NADH + H(+). It catalyses the reaction (3S)-3-hydroxybutanoyl-CoA = (3R)-3-hydroxybutanoyl-CoA. The protein operates within lipid metabolism; fatty acid beta-oxidation. Functionally, catalyzes the formation of a hydroxyacyl-CoA by addition of water on enoyl-CoA. Also exhibits 3-hydroxyacyl-CoA epimerase and 3-hydroxyacyl-CoA dehydrogenase activities. This chain is Fatty acid oxidation complex subunit alpha, found in Shigella boydii serotype 18 (strain CDC 3083-94 / BS512).